A 359-amino-acid chain; its full sequence is Peroxisome assembly protein 12 (359 aa).

Topologically, residues 1 to 19 (MAEHGAHITTASVADDQPS) are peroxisomal matrix. A helical membrane pass occupies residues 20–47 (IFEVVAQDSLMTAVRPALQHVVKVLAES). The Cytoplasmic portion of the chain corresponds to 48 to 51 (NPAH). Residues 52 to 76 (YGFFWRWFDEIFTLLDFLLQQHYLS) form a helical membrane-spanning segment. The Peroxisomal matrix segment spans residues 77–109 (RTSASFSEHFYGLKRIVAGSSPQLQRPASAGLP). The helical transmembrane segment at 110–139 (KEHLWKSAMFLVLLPYLKVKLEKLASTLRE) threads the bilayer. The Cytoplasmic portion of the chain corresponds to 140–144 (EDEYS). The helical transmembrane segment at 145-183 (IHPPSSHWKRFYRVFLAAYPFVTMTWEGWFLTQQLRYIL) threads the bilayer. Topologically, residues 184-249 (GKAEHHSPLL…VGGVALSLST (66 aa)) are peroxisomal matrix. A helical membrane pass occupies residues 250 to 277 (GLSVGVFFLQFLDWWYSSENQETIKSLT). Over 278 to 359 (ALPTPPPPVH…HLIKLYSPEN (82 aa)) the chain is Cytoplasmic. 4 residues coordinate Zn(2+): cysteine 304, cysteine 307, cysteine 325, and cysteine 328. An RING-type; degenerate zinc finger spans residues 304-343 (CPLCRKARVNDTVLATSGYVFCYRCVFNYVRSHQACPITG).

It belongs to the pex2/pex10/pex12 family. As to quaternary structure, component of the PEX2-PEX10-PEX12 retrotranslocation channel, composed of PEX2, PEX10 and PEX12. Interacts with PEX19 via its cytoplasmic domain.

It is found in the peroxisome membrane. It participates in protein modification; protein ubiquitination. Component of a retrotranslocation channel required for peroxisome organization by mediating export of the PEX5 receptor from peroxisomes to the cytosol, thereby promoting PEX5 recycling. The retrotranslocation channel is composed of PEX2, PEX10 and PEX12; each subunit contributing transmembrane segments that coassemble into an open channel that specifically allows the passage of PEX5 through the peroxisomal membrane. PEX12 also regulates PEX5 recycling by activating the E3 ubiquitin-protein ligase activity of PEX10. When PEX5 recycling is compromised, PEX12 stimulates PEX10-mediated polyubiquitination of PEX5, leading to its subsequent degradation. This chain is Peroxisome assembly protein 12 (Pex12), found in Rattus norvegicus (Rat).